The following is a 233-amino-acid chain: MSKLILIRHGQSLWNAANKFTGWVDIPLSRRGRAEAMIAASKLQEQGYRIDVCFTSLLIRAMETAIIALTEYEQLCGGKTPIFKHDADDLDWHGWDKYDGDPKEELPIFPSQALDERYYGDLQGLNKAQTAQKYGSEQVHEWRRSYFTRPPGGESLEDTQKRVIPYFENRILTHIAHGDTVMVAAHGNSLRAMIMRLENLQPEDVPNLELATGIPLIYEVDQQAKVSNKIVLH.

Substrate-binding positions include 8 to 15 (RHGQSLWN), 21 to 22 (TG), arginine 60, 116 to 119 (ERYY), lysine 127, 143 to 144 (RR), and 187 to 188 (GN). The active-site Tele-phosphohistidine intermediate is the histidine 9. Glutamate 116 functions as the Proton donor/acceptor in the catalytic mechanism.

It belongs to the phosphoglycerate mutase family. BPG-dependent PGAM subfamily.

The catalysed reaction is (2R)-2-phosphoglycerate = (2R)-3-phosphoglycerate. It functions in the pathway carbohydrate degradation; glycolysis; pyruvate from D-glyceraldehyde 3-phosphate: step 3/5. Functionally, catalyzes the interconversion of 2-phosphoglycerate and 3-phosphoglycerate. This chain is 2,3-bisphosphoglycerate-dependent phosphoglycerate mutase, found in Gloeothece citriformis (strain PCC 7424) (Cyanothece sp. (strain PCC 7424)).